A 428-amino-acid chain; its full sequence is Serine hydroxymethyltransferase (428 aa).

Residue 120 to 122 participates in (6S)-5,6,7,8-tetrahydrofolate binding; it reads GHI. Lysine 226 is modified (N6-(pyridoxal phosphate)lysine).

This sequence belongs to the SHMT family. Homodimer. It depends on pyridoxal 5'-phosphate as a cofactor.

Its subcellular location is the cytoplasm. The catalysed reaction is 5,10-methylenetetrahydromethanopterin + glycine + H2O = 5,6,7,8-tetrahydromethanopterin + L-serine. The protein operates within amino-acid biosynthesis; glycine biosynthesis; glycine from L-serine: step 1/1. In terms of biological role, catalyzes the reversible interconversion of serine and glycine with tetrahydromethanopterin (H4MPT) serving as the one-carbon carrier. Also exhibits a pteridine-independent aldolase activity toward beta-hydroxyamino acids, producing glycine and aldehydes, via a retro-aldol mechanism. This chain is Serine hydroxymethyltransferase, found in Methanopyrus kandleri (strain AV19 / DSM 6324 / JCM 9639 / NBRC 100938).